Reading from the N-terminus, the 1938-residue chain is Myosin-4 (1938 aa).

One can recognise a Myosin N-terminal SH3-like domain in the interval 33–82; that stretch reads DAKSSVFVADPKESFVKATVQSREGGKVTAKTEAGATVTVKEDQVFPMNP. Ser-36 is modified (phosphoserine). Phosphothreonine is present on residues Thr-64 and Thr-69. Positions 86 to 781 constitute a Myosin motor domain; it reads DKIEDMAMMT…LLGLLEEMRD (696 aa). 179 to 186 is an ATP binding site; sequence GESGAGKT. Tyr-389 is subject to Phosphotyrosine. Ser-392 is subject to Phosphoserine. At Thr-419 the chain carries Phosphothreonine. A Phosphotyrosine modification is found at Tyr-424. Positions 658 to 680 are actin-binding; that stretch reads LNKLMTNLRSTHPHFVRCIIPNE. His-756 carries the pros-methylhistidine modification. Residues 760–774 are actin-binding; that stretch reads KFGHTKVFFKAGLLG. The region spanning 784–813 is the IQ domain; it reads LAQLITRTQAMCRGFLARVEYKKMVERRES. Positions 845 to 1926 form a coiled coil; it reads SAETEKEMAN…ESQVNKLRVK (1082 aa). Residues Ser-1091, Ser-1095, Ser-1161, and Ser-1236 each carry the phosphoserine modification. Thr-1240 is modified (phosphothreonine). The residue at position 1242 (Ser-1242) is a Phosphoserine. At Thr-1254 the chain carries Phosphothreonine. Residue Ser-1260 is modified to Phosphoserine. Position 1264 is a phosphothreonine (Thr-1264). Residue Ser-1277 is modified to Phosphoserine. Residue Thr-1285 is modified to Phosphothreonine. Phosphoserine is present on residues Ser-1287, Ser-1291, Ser-1302, and Ser-1305. Tyr-1463 carries the phosphotyrosine modification. Thr-1466 is subject to Phosphothreonine. Ser-1473 carries the post-translational modification Phosphoserine. The residue at position 1491 (Tyr-1491) is a Phosphotyrosine. Ser-1494 is subject to Phosphoserine. Thr-1500 is subject to Phosphothreonine. Residue Ser-1513 is modified to Phosphoserine. A Phosphothreonine modification is found at Thr-1516. Phosphoserine occurs at positions 1541, 1553, 1573, 1599, 1602, 1713, and 1725. Thr-1729 and Thr-1735 each carry phosphothreonine. Position 1738 is a phosphoserine (Ser-1738).

It belongs to the TRAFAC class myosin-kinesin ATPase superfamily. Myosin family. In terms of assembly, muscle myosin is a hexameric protein that consists of 2 heavy chain subunits (MHC), 2 alkali light chain subunits (MLC) and 2 regulatory light chain subunits (MLC-2).

It is found in the cytoplasm. Its subcellular location is the myofibril. Its function is as follows. Muscle contraction. In Oryctolagus cuniculus (Rabbit), this protein is Myosin-4 (MYH4).